A 325-amino-acid chain; its full sequence is Serpentine receptor class delta-59 (325 aa).

A run of 8 helical transmembrane segments spans residues 14–34 (WYWPFCGVLAIIFQTILLHLI), 45–65 (LKIFLYNTSCVQIALITFAFL), 75–95 (ISAAVLSLGPCSYVSPTTCFI), 97–117 (YHVFMATSFGAGSAIAITVLF), 132–152 (TYIMVLASYIAPLVVLIIPFT), 190–210 (FLSATLLLSIGAYGIPIGCLI), 235–255 (TLIHGLIVQSMLPFISYIPSF), and 275–295 (ILVSSAFPALLDPFISFYFIV).

It belongs to the nematode receptor-like protein srd family.

Its subcellular location is the membrane. This chain is Serpentine receptor class delta-59 (srd-59), found in Caenorhabditis elegans.